Reading from the N-terminus, the 453-residue chain is Carbamoyl phosphate synthase arginine-specific small chain (453 aa).

The transit peptide at 1 to 28 (MFARVFKAMPARASALTSVNASIQARFM) directs the protein to the mitochondrion. The region spanning 219-406 (HVAVIDCGVK…IDSVKKYKAS (188 aa)) is the Glutamine amidotransferase type-1 domain. Cys295 (nucleophile) is an active-site residue. Active-site residues include His379 and Glu381.

This sequence belongs to the CarA family. Heterodimer composed of 2 chains; the small (or glutamine) chain promotes the hydrolysis of glutamine to ammonia, which is used by the large (or ammonia) chain to synthesize carbamoyl phosphate.

It is found in the mitochondrion matrix. It catalyses the reaction hydrogencarbonate + L-glutamine + 2 ATP + H2O = carbamoyl phosphate + L-glutamate + 2 ADP + phosphate + 2 H(+). The catalysed reaction is L-glutamine + H2O = L-glutamate + NH4(+). It participates in amino-acid biosynthesis; L-arginine biosynthesis; carbamoyl phosphate from bicarbonate: step 1/1. Small subunit of the arginine-specific carbamoyl phosphate synthase (CPSase). CPSase catalyzes the formation of carbamoyl phosphate from the ammonia moiety of glutamine, carbonate, and phosphate donated by ATP, the first step of the arginine biosynthetic pathway. The small subunit (glutamine amidotransferase) binds and cleaves glutamine to supply the large subunit with the substrate ammonia. The protein is Carbamoyl phosphate synthase arginine-specific small chain (cpa1) of Neosartorya fischeri (strain ATCC 1020 / DSM 3700 / CBS 544.65 / FGSC A1164 / JCM 1740 / NRRL 181 / WB 181) (Aspergillus fischerianus).